A 319-amino-acid chain; its full sequence is ATP-dependent 6-phosphofructokinase (319 aa).

An ATP-binding site is contributed by glycine 11. 21 to 25 (RAVVR) provides a ligand contact to ADP. ATP contacts are provided by residues 72 to 73 (RC) and 102 to 105 (GDGS). Aspartate 103 is a Mg(2+) binding site. 125-127 (TID) contributes to the substrate binding site. The active-site Proton acceptor is aspartate 127. Arginine 154 lines the ADP pocket. Residues arginine 162 and 169-171 (MGR) each bind substrate. Residues 185-187 (GAE), arginine 211, and 213-215 (KKH) contribute to the ADP site. Residues glutamate 222, arginine 243, and 249–252 (HVQR) contribute to the substrate site.

The protein belongs to the phosphofructokinase type A (PFKA) family. ATP-dependent PFK group I subfamily. Prokaryotic clade 'B1' sub-subfamily. Homotetramer. It depends on Mg(2+) as a cofactor.

The protein resides in the cytoplasm. The catalysed reaction is beta-D-fructose 6-phosphate + ATP = beta-D-fructose 1,6-bisphosphate + ADP + H(+). The protein operates within carbohydrate degradation; glycolysis; D-glyceraldehyde 3-phosphate and glycerone phosphate from D-glucose: step 3/4. Allosterically activated by ADP and other diphosphonucleosides, and allosterically inhibited by phosphoenolpyruvate. Its function is as follows. Catalyzes the phosphorylation of D-fructose 6-phosphate to fructose 1,6-bisphosphate by ATP, the first committing step of glycolysis. The chain is ATP-dependent 6-phosphofructokinase from Anoxybacillus flavithermus (strain DSM 21510 / WK1).